A 470-amino-acid chain; its full sequence is tRNA-2-methylthio-N(6)-dimethylallyladenosine synthase (470 aa).

Residues 5–122 form the MTTase N-terminal domain; sequence RKLYVKSFGC…LPELLAEAKA (118 aa). [4Fe-4S] cluster is bound by residues Cys-14, Cys-50, Cys-85, Cys-163, Cys-167, and Cys-170. Residues 149–383 form the Radical SAM core domain; that stretch reads RSRGPAAFVT…LLEASKAAFD (235 aa). Positions 384 to 446 constitute a TRAM domain; it reads ESCRGRTFDI…PNSLAGVPAE (63 aa). Residues 439 to 470 form a disordered region; it reads SLAGVPAEASEPSVSQSPVSSARSRPLAAMEA. Low complexity predominate over residues 444–464; sequence PAEASEPSVSQSPVSSARSRP.

It belongs to the methylthiotransferase family. MiaB subfamily. As to quaternary structure, monomer. [4Fe-4S] cluster is required as a cofactor.

The protein localises to the cytoplasm. The catalysed reaction is N(6)-dimethylallyladenosine(37) in tRNA + (sulfur carrier)-SH + AH2 + 2 S-adenosyl-L-methionine = 2-methylsulfanyl-N(6)-dimethylallyladenosine(37) in tRNA + (sulfur carrier)-H + 5'-deoxyadenosine + L-methionine + A + S-adenosyl-L-homocysteine + 2 H(+). In terms of biological role, catalyzes the methylthiolation of N6-(dimethylallyl)adenosine (i(6)A), leading to the formation of 2-methylthio-N6-(dimethylallyl)adenosine (ms(2)i(6)A) at position 37 in tRNAs that read codons beginning with uridine. This chain is tRNA-2-methylthio-N(6)-dimethylallyladenosine synthase, found in Xanthobacter autotrophicus (strain ATCC BAA-1158 / Py2).